A 361-amino-acid polypeptide reads, in one-letter code: Chorismate synthase (361 aa).

Arg-47 lines the NADP(+) pocket. FMN is bound by residues 124-126, Gly-286, 301-305, and Arg-327; these read RAS and KPTAT.

It belongs to the chorismate synthase family. In terms of assembly, homotetramer. FMNH2 is required as a cofactor.

The enzyme catalyses 5-O-(1-carboxyvinyl)-3-phosphoshikimate = chorismate + phosphate. It functions in the pathway metabolic intermediate biosynthesis; chorismate biosynthesis; chorismate from D-erythrose 4-phosphate and phosphoenolpyruvate: step 7/7. In terms of biological role, catalyzes the anti-1,4-elimination of the C-3 phosphate and the C-6 proR hydrogen from 5-enolpyruvylshikimate-3-phosphate (EPSP) to yield chorismate, which is the branch point compound that serves as the starting substrate for the three terminal pathways of aromatic amino acid biosynthesis. This reaction introduces a second double bond into the aromatic ring system. The sequence is that of Chorismate synthase from Prochlorococcus marinus (strain NATL2A).